Reading from the N-terminus, the 230-residue chain is Leucyl/phenylalanyl-tRNA--protein transferase (230 aa).

It belongs to the L/F-transferase family.

The protein resides in the cytoplasm. It catalyses the reaction N-terminal L-lysyl-[protein] + L-leucyl-tRNA(Leu) = N-terminal L-leucyl-L-lysyl-[protein] + tRNA(Leu) + H(+). It carries out the reaction N-terminal L-arginyl-[protein] + L-leucyl-tRNA(Leu) = N-terminal L-leucyl-L-arginyl-[protein] + tRNA(Leu) + H(+). The catalysed reaction is L-phenylalanyl-tRNA(Phe) + an N-terminal L-alpha-aminoacyl-[protein] = an N-terminal L-phenylalanyl-L-alpha-aminoacyl-[protein] + tRNA(Phe). In terms of biological role, functions in the N-end rule pathway of protein degradation where it conjugates Leu, Phe and, less efficiently, Met from aminoacyl-tRNAs to the N-termini of proteins containing an N-terminal arginine or lysine. This is Leucyl/phenylalanyl-tRNA--protein transferase from Syntrophotalea carbinolica (strain DSM 2380 / NBRC 103641 / GraBd1) (Pelobacter carbinolicus).